The chain runs to 432 residues: Gamma-glutamyl phosphate reductase (432 aa).

This sequence belongs to the gamma-glutamyl phosphate reductase family.

It localises to the cytoplasm. It carries out the reaction L-glutamate 5-semialdehyde + phosphate + NADP(+) = L-glutamyl 5-phosphate + NADPH + H(+). It participates in amino-acid biosynthesis; L-proline biosynthesis; L-glutamate 5-semialdehyde from L-glutamate: step 2/2. Its function is as follows. Catalyzes the NADPH-dependent reduction of L-glutamate 5-phosphate into L-glutamate 5-semialdehyde and phosphate. The product spontaneously undergoes cyclization to form 1-pyrroline-5-carboxylate. This is Gamma-glutamyl phosphate reductase from Deinococcus radiodurans (strain ATCC 13939 / DSM 20539 / JCM 16871 / CCUG 27074 / LMG 4051 / NBRC 15346 / NCIMB 9279 / VKM B-1422 / R1).